Here is a 679-residue protein sequence, read N- to C-terminus: Enzymatic polyprotein (679 aa).

A protease region spans residues 40–130 (LHCFVDTGAS…LYEPFIQFTD (91 aa)). The active site involves Asp45. A Reverse transcriptase domain is found at 272-452 (LKVIKPSKSP…KKINFLGLEI (181 aa)).

Belongs to the caulimoviridae enzymatic polyprotein family.

It catalyses the reaction DNA(n) + a 2'-deoxyribonucleoside 5'-triphosphate = DNA(n+1) + diphosphate. Functionally, encodes for at least two polypeptides: protease (PR) and reverse transcriptase (RT). The protease processes the polyprotein in cis. Reverse transcriptase is multifunctional enzyme that converts the viral RNA genome into dsDNA in viral cytoplasmic capsids. This enzyme displays a DNA polymerase activity that can copy either DNA or RNA templates, and a ribonuclease H (RNase H) activity that cleaves the RNA strand of RNA-DNA heteroduplexes in a partially processive 3'- to 5'-endonucleasic mode. Neo-synthesized pregenomic RNA (pgRNA) are encapsidated, and reverse-transcribed inside the nucleocapsid. Partial (+)DNA is synthesized from the (-)DNA template and generates the relaxed circular DNA (RC-DNA) genome. After budding and infection, the RC-DNA migrates in the nucleus, and is converted into a plasmid-like covalently closed circular DNA (cccDNA). In Cauliflower mosaic virus (strain CM-1841) (CaMV), this protein is Enzymatic polyprotein.